We begin with the raw amino-acid sequence, 332 residues long: Glycine betaine-binding periplasmic protein OusX (332 aa).

A signal peptide spans 1–21; that stretch reads MRNISMATLALTTVLSTGLFA.

As to quaternary structure, the complex is composed of two ATP-binding proteins (OusV), two transmembrane proteins (OusW) and a solute-binding protein (OusX).

It localises to the periplasm. Its function is as follows. Part of the OusB ABC transporter complex involved in glycine betaine and choline uptake. Binds glycine betaine. The protein is Glycine betaine-binding periplasmic protein OusX of Dickeya dadantii (strain 3937) (Erwinia chrysanthemi (strain 3937)).